The chain runs to 582 residues: MHNDKDLSTWQTFRRLWPTIAPFKAGLIVAGVALILNAASDTFMLSLLKPLLDDGFGKTDRSVLVWMPLVVIGLMILRGITSYVSSYCISWVSGKVVMTMRRRLFGHMMGMPVSFFDKQSTGTLLSRITYDSEQVASSSSGALITVVREGASIIGLFIMMFYYSWQLSIILIVLAPIVSIAIRVVSKRFRNISKNMQNTMGQVTTSAEQMLKGHKEVLIFGGQEVETKRFDKVSNRMRLQGMKMVSASSISDPIIQLIASLALAFVLYAASFPSVMDSLTAGTITVVFSSMIALMRPLKSLTNVNAQFQRGMAACQTLFTILDSEQEKDEGKRVIERATGDVEFRNVTFTYPGRDVPALRNINLKIPAGKTVALVGRSGSGKSTIASLITRFYDIDEGEILMDGHDLREYTLASLRNQVALVSQNVHLFNDTVANNIAYARTEQYSREQIEEAARMAYAMDFINKMDNGLDTVIGENGVLLSGGQRQRIAIARALLRDSPILILDEATSALDTESERAIQAALDELQKNRTSLVIAHRLSTIEKADEIVVVEDGVIVERGTHNDLLEHRGVYAQLHKMQFGQ.

5 helical membrane passes run 16–36, 63–83, 153–173, 253–273, and 275–295; these read LWPT…ALIL, VLVW…ITSY, IIGL…ILIV, PIIQ…ASFP, and VMDS…IALM. Positions 28–310 constitute an ABC transmembrane type-1 domain; it reads IVAGVALILN…LTNVNAQFQR (283 aa). An ABC transporter domain is found at 342–578; sequence VEFRNVTFTY…RGVYAQLHKM (237 aa). 376–383 is an ATP binding site; sequence GRSGSGKS.

Belongs to the ABC transporter superfamily. Lipid exporter (TC 3.A.1.106) family. As to quaternary structure, homodimer.

It localises to the cell inner membrane. It catalyses the reaction ATP + H2O + lipid A-core oligosaccharideSide 1 = ADP + phosphate + lipid A-core oligosaccharideSide 2.. Involved in lipopolysaccharide (LPS) biosynthesis. Translocates lipid A-core from the inner to the outer leaflet of the inner membrane. Transmembrane domains (TMD) form a pore in the inner membrane and the ATP-binding domain (NBD) is responsible for energy generation. In Escherichia coli O157:H7, this protein is ATP-dependent lipid A-core flippase.